Consider the following 494-residue polypeptide: Glutamyl-tRNA(Gln) amidotransferase subunit A (494 aa).

Active-site charge relay system residues include Lys-81 and Ser-156. Ser-180 (acyl-ester intermediate) is an active-site residue.

The protein belongs to the amidase family. GatA subfamily. In terms of assembly, heterotrimer of A, B and C subunits.

The enzyme catalyses L-glutamyl-tRNA(Gln) + L-glutamine + ATP + H2O = L-glutaminyl-tRNA(Gln) + L-glutamate + ADP + phosphate + H(+). Its function is as follows. Allows the formation of correctly charged Gln-tRNA(Gln) through the transamidation of misacylated Glu-tRNA(Gln) in organisms which lack glutaminyl-tRNA synthetase. The reaction takes place in the presence of glutamine and ATP through an activated gamma-phospho-Glu-tRNA(Gln). In Mycobacterium bovis (strain ATCC BAA-935 / AF2122/97), this protein is Glutamyl-tRNA(Gln) amidotransferase subunit A.